A 382-amino-acid polypeptide reads, in one-letter code: Histidinol-phosphate aminotransferase (382 aa).

Residues 1-28 (MTSAPRPRPTLDDLPLREDLRGKSPYGA) form a disordered region. A compositionally biased stretch (basic and acidic residues) spans 9 to 22 (PTLDDLPLREDLRG). At Lys-233 the chain carries N6-(pyridoxal phosphate)lysine.

The protein belongs to the class-II pyridoxal-phosphate-dependent aminotransferase family. Histidinol-phosphate aminotransferase subfamily. Homodimer. It depends on pyridoxal 5'-phosphate as a cofactor.

It carries out the reaction L-histidinol phosphate + 2-oxoglutarate = 3-(imidazol-4-yl)-2-oxopropyl phosphate + L-glutamate. Its pathway is amino-acid biosynthesis; L-histidine biosynthesis; L-histidine from 5-phospho-alpha-D-ribose 1-diphosphate: step 7/9. The polypeptide is Histidinol-phosphate aminotransferase (Mycobacterium marinum (strain ATCC BAA-535 / M)).